The chain runs to 437 residues: Probable N-acetylmuramidase (437 aa).

The signal sequence occupies residues 1-57 (MPVSRVKVKNRHLKKKTKKPLAFYKPATKFAGAVLIAGTLTTTHELLLQQTSPMVQA). 3 disordered regions span residues 217–244 (SSAG…SSTT), 290–320 (ASST…SQTT), and 367–392 (AASN…NSNA). A LysM 1 domain is found at 243 to 286 (TTYTVKSGDTLWGISQRYGISVAQIQSANNLKSTIIYIGQKLVL). Residues 290–317 (ASSTNSGGSNNSASTTPTTSVTPAKPTS) show a composition bias toward low complexity. The 44-residue stretch at 319–362 (TTVKVKSGDTLWALSVKYKTSIAQLKSWNHLSSDTIYIGQNLIV) folds into the LysM 2 domain. Residues 393–436 (SIHKVVKGDTLWGLSQKSGSPIASIKAWNHLSSDTILIGQYLRI) form the LysM 3 domain.

It belongs to the glycosyl hydrolase 73 family.

The protein resides in the secreted. The enzyme catalyses Hydrolysis of (1-&gt;4)-beta-linkages between N-acetylmuramic acid and N-acetyl-D-glucosamine residues in a peptidoglycan and between N-acetyl-D-glucosamine residues in chitodextrins.. In terms of biological role, hydrolyzes the cell wall of L.lactis and M.lysodeikticus. Required for cell separation during growth. The protein is Probable N-acetylmuramidase (acmA) of Lactococcus lactis subsp. cremoris (strain MG1363).